Consider the following 471-residue polypeptide: Tyrosine--tRNA ligase (471 aa).

Y41 contributes to the L-tyrosine binding site. The 'HIGH' region signature appears at 46-55; that stretch reads PTAPSLHVGN. Residues Y176 and Q180 each coordinate L-tyrosine. A 'KMSKS' region motif is present at residues 236 to 240; the sequence is KFGKT. K239 provides a ligand contact to ATP. In terms of domain architecture, S4 RNA-binding spans 403–471; sequence DLITHILQKV…GKKHLAAVFY (69 aa).

It belongs to the class-I aminoacyl-tRNA synthetase family. TyrS type 1 subfamily. As to quaternary structure, homodimer.

It localises to the cytoplasm. The catalysed reaction is tRNA(Tyr) + L-tyrosine + ATP = L-tyrosyl-tRNA(Tyr) + AMP + diphosphate + H(+). Functionally, catalyzes the attachment of tyrosine to tRNA(Tyr) in a two-step reaction: tyrosine is first activated by ATP to form Tyr-AMP and then transferred to the acceptor end of tRNA(Tyr). The protein is Tyrosine--tRNA ligase of Tropheryma whipplei (strain Twist) (Whipple's bacillus).